The primary structure comprises 437 residues: Phosphoglucosamine mutase (437 aa).

Ser-101 (phosphoserine intermediate) is an active-site residue. Positions 101, 234, 236, and 238 each coordinate Mg(2+). Residue Ser-101 is modified to Phosphoserine.

The protein belongs to the phosphohexose mutase family. The cofactor is Mg(2+). Activated by phosphorylation.

It carries out the reaction alpha-D-glucosamine 1-phosphate = D-glucosamine 6-phosphate. In terms of biological role, catalyzes the conversion of glucosamine-6-phosphate to glucosamine-1-phosphate. The chain is Phosphoglucosamine mutase from Thermus thermophilus (strain ATCC BAA-163 / DSM 7039 / HB27).